We begin with the raw amino-acid sequence, 503 residues long: Ribonuclease Y (503 aa).

Residues 2 to 22 traverse the membrane as a helical segment; it reads GIIIGLIIVSVALIISLCSLL. Residues 193–253 form the KH domain; it reads TTNLVKLPND…IRREIATKTL (61 aa). Residues 319-412 enclose the HD domain; the sequence is VLLHSVEVAK…VAIADAISAS (94 aa).

Belongs to the RNase Y family.

It localises to the cell membrane. Its function is as follows. Endoribonuclease that initiates mRNA decay. The chain is Ribonuclease Y from Mesoplasma florum (strain ATCC 33453 / NBRC 100688 / NCTC 11704 / L1) (Acholeplasma florum).